The sequence spans 194 residues: Der GTPase-activating protein YihI (194 aa).

The segment at 1 to 81 (MSRSKKTRRI…AKVKKDPRVG (81 aa)) is disordered. Basic and acidic residues-rich tracts occupy residues 9–23 (RISD…DKKP) and 36–47 (TRYELDVQAREE). Polar residues predominate over residues 59–70 (GSRNVITEQKTA).

Belongs to the YihI family. As to quaternary structure, interacts with Der.

In terms of biological role, a GTPase-activating protein (GAP) that modifies Der/EngA GTPase function. May play a role in ribosome biogenesis. This is Der GTPase-activating protein YihI from Haemophilus ducreyi (strain 35000HP / ATCC 700724).